A 380-amino-acid chain; its full sequence is L-lactate dehydrogenase (380 aa).

The region spanning 1–380 (MIISASTDYR…SADSLVQGLR (380 aa)) is the FMN hydroxy acid dehydrogenase domain. Tyr-24 serves as a coordination point for substrate. FMN-binding residues include Ser-106 and Gln-127. Tyr-129 contacts substrate. Thr-155 is a binding site for FMN. Arg-164 contacts substrate. Residue Lys-251 participates in FMN binding. Residue His-275 is the Proton acceptor of the active site. Arg-278 serves as a coordination point for substrate. 306–330 (DSGIRSGLDVVRMIALGADGVLLGR) lines the FMN pocket.

Belongs to the FMN-dependent alpha-hydroxy acid dehydrogenase family. The cofactor is FMN.

It is found in the cell inner membrane. The enzyme catalyses (S)-lactate + A = pyruvate + AH2. Catalyzes the conversion of L-lactate to pyruvate. Is coupled to the respiratory chain. The polypeptide is L-lactate dehydrogenase (Serratia proteamaculans (strain 568)).